Reading from the N-terminus, the 129-residue chain is Small ribosomal subunit protein uS9 (129 aa).

Belongs to the universal ribosomal protein uS9 family.

This is Small ribosomal subunit protein uS9 (rpsI) from Helicobacter pylori (strain J99 / ATCC 700824) (Campylobacter pylori J99).